We begin with the raw amino-acid sequence, 615 residues long: Protein DBF4 homolog B (615 aa).

In terms of domain architecture, BRCT spans 43–133 (ARKHPFSGKS…DPKGSHPRPS (91 aa)). Disordered stretches follow at residues 93–141 (REVK…DSVP) and 264–293 (FEAPTTLGSMHHTRESKDGEPSPRSAAHTM). Over residues 275 to 284 (HTRESKDGEP) the composition is skewed to basic and acidic residues. A DBF4-type zinc finger spans residues 294–343 (PRRKKGYCECCQEAFEELHVHLQSAQHRSFALEAHLYAEVDRIIAQLSHS). 4 residues coordinate Zn(2+): C301, C304, H314, and H320. Positions 371–407 (TLHPHQPSHPRAASPRIRKEDSCQASVTQGRAAGQQR) are disordered.

As to quaternary structure, forms a complex with CDC7. Note that CDC7 forms distinct complex either with DBF4/DBF4A or DBF4B. Such complexes are stable upon replication stress. Post-translationally, phosphorylated. Widely expressed. Highly expressed in testis.

The protein localises to the nucleus. Functionally, regulatory subunit for CDC7 which activates its kinase activity thereby playing a central role in DNA replication and cell proliferation. Required for progression of S and M phases. The complex CDC7-DBF4B selectively phosphorylates MCM2 subunit at 'Ser-40' and then is involved in regulating the initiation of DNA replication during cell cycle. The protein is Protein DBF4 homolog B (DBF4B) of Homo sapiens (Human).